Reading from the N-terminus, the 96-residue chain is Large ribosomal subunit protein uL23cz (96 aa).

The protein belongs to the universal ribosomal protein uL23 family. As to quaternary structure, part of the 50S ribosomal subunit.

The protein localises to the plastid. The protein resides in the chloroplast. Its function is as follows. Binds to 23S rRNA. This chain is Large ribosomal subunit protein uL23cz (rpl23-A), found in Sorghum bicolor (Sorghum).